A 180-amino-acid chain; its full sequence is Pro-glucagon (180 aa).

A signal peptide spans 1–20 (MKTIYFVAGLFVMLVQGSWQ). Residues 25-59 (NTEEKSRSFPAPQTDPLDDPDQMTEDKRHSQGTFT) are disordered. The residue at position 54 (serine 54) is a Phosphoserine. Positions 84–89 (NKNNIA) are excised as a propeptide. Phosphoserine occurs at positions 105 and 108. At arginine 127 the chain carries Arginine amide. Residues 131 to 145 (DFPEEVTIVEELRRR) constitute a propeptide that is removed on maturation. Residues serine 150 and serine 152 each carry the phosphoserine modification.

Belongs to the glucagon family. Proglucagon is post-translationally processed in a tissue-specific manner in pancreatic A cells and intestinal L cells. In pancreatic A cells, the major bioactive hormone is glucagon cleaved by PCSK2/PC2. In the intestinal L cells PCSK1/PC1 liberates GLP-1, GLP-2, glicentin and oxyntomodulin. GLP-1 is further N-terminally truncated by post-translational processing in the intestinal L cells resulting in GLP-1(7-37) GLP-1-(7-36)amide. The C-terminal amidation is neither important for the metabolism of GLP-1 nor for its effects on the endocrine pancreas. As to expression, glucagon is secreted in the A cells of the islets of Langerhans. GLP-1, GLP-2, oxyntomodulin and glicentin are secreted from enteroendocrine cells throughout the gastrointestinal tract. GLP-1 and GLP-2 are also secreted in selected neurons in the brain.

The protein localises to the secreted. Plays a key role in glucose metabolism and homeostasis. Regulates blood glucose by increasing gluconeogenesis and decreasing glycolysis. A counterregulatory hormone of insulin, raises plasma glucose levels in response to insulin-induced hypoglycemia. Plays an important role in initiating and maintaining hyperglycemic conditions in diabetes. Functionally, potent stimulator of glucose-dependent insulin release. Also stimulates insulin release in response to IL6. Plays important roles on gastric motility and the suppression of plasma glucagon levels. May be involved in the suppression of satiety and stimulation of glucose disposal in peripheral tissues, independent of the actions of insulin. Has growth-promoting activities on intestinal epithelium. May also regulate the hypothalamic pituitary axis (HPA) via effects on LH, TSH, CRH, oxytocin, and vasopressin secretion. Increases islet mass through stimulation of islet neogenesis and pancreatic beta cell proliferation. Inhibits beta cell apoptosis. Its function is as follows. Stimulates intestinal growth and up-regulates villus height in the small intestine, concomitant with increased crypt cell proliferation and decreased enterocyte apoptosis. The gastrointestinal tract, from the stomach to the colon is the principal target for GLP-2 action. Plays a key role in nutrient homeostasis, enhancing nutrient assimilation through enhanced gastrointestinal function, as well as increasing nutrient disposal. Stimulates intestinal glucose transport and decreases mucosal permeability. In terms of biological role, significantly reduces food intake. Inhibits gastric emptying in humans. Suppression of gastric emptying may lead to increased gastric distension, which may contribute to satiety by causing a sensation of fullness. May modulate gastric acid secretion and the gastro-pyloro-duodenal activity. May play an important role in intestinal mucosal growth in the early period of life. The chain is Pro-glucagon (GCG) from Sus scrofa (Pig).